Reading from the N-terminus, the 104-residue chain is Large ribosomal subunit protein bL21 (104 aa).

This sequence belongs to the bacterial ribosomal protein bL21 family. In terms of assembly, part of the 50S ribosomal subunit. Contacts protein L20.

In terms of biological role, this protein binds to 23S rRNA in the presence of protein L20. The polypeptide is Large ribosomal subunit protein bL21 (Moorella thermoacetica (strain ATCC 39073 / JCM 9320)).